Reading from the N-terminus, the 872-residue chain is Alanine--tRNA ligase (872 aa).

His-571, His-575, Cys-674, and His-678 together coordinate Zn(2+).

Belongs to the class-II aminoacyl-tRNA synthetase family. Requires Zn(2+) as cofactor.

The protein resides in the cytoplasm. The catalysed reaction is tRNA(Ala) + L-alanine + ATP = L-alanyl-tRNA(Ala) + AMP + diphosphate. Functionally, catalyzes the attachment of alanine to tRNA(Ala) in a two-step reaction: alanine is first activated by ATP to form Ala-AMP and then transferred to the acceptor end of tRNA(Ala). Also edits incorrectly charged Ser-tRNA(Ala) and Gly-tRNA(Ala) via its editing domain. This chain is Alanine--tRNA ligase, found in Symbiobacterium thermophilum (strain DSM 24528 / JCM 14929 / IAM 14863 / T).